The primary structure comprises 241 residues: UDP-2,3-diacylglucosamine hydrolase (241 aa).

Mn(2+) contacts are provided by aspartate 8, histidine 10, aspartate 41, asparagine 79, and histidine 114. 79–80 (NR) is a substrate binding site. Positions 122, 160, 164, 167, and 195 each coordinate substrate. Positions 195 and 197 each coordinate Mn(2+).

It belongs to the LpxH family. Mn(2+) serves as cofactor.

The protein resides in the cell inner membrane. The enzyme catalyses UDP-2-N,3-O-bis[(3R)-3-hydroxytetradecanoyl]-alpha-D-glucosamine + H2O = 2-N,3-O-bis[(3R)-3-hydroxytetradecanoyl]-alpha-D-glucosaminyl 1-phosphate + UMP + 2 H(+). It functions in the pathway glycolipid biosynthesis; lipid IV(A) biosynthesis; lipid IV(A) from (3R)-3-hydroxytetradecanoyl-[acyl-carrier-protein] and UDP-N-acetyl-alpha-D-glucosamine: step 4/6. Its function is as follows. Hydrolyzes the pyrophosphate bond of UDP-2,3-diacylglucosamine to yield 2,3-diacylglucosamine 1-phosphate (lipid X) and UMP by catalyzing the attack of water at the alpha-P atom. Involved in the biosynthesis of lipid A, a phosphorylated glycolipid that anchors the lipopolysaccharide to the outer membrane of the cell. The sequence is that of UDP-2,3-diacylglucosamine hydrolase from Aeromonas hydrophila subsp. hydrophila (strain ATCC 7966 / DSM 30187 / BCRC 13018 / CCUG 14551 / JCM 1027 / KCTC 2358 / NCIMB 9240 / NCTC 8049).